The primary structure comprises 546 residues: Sulfite oxidase, mitochondrial (546 aa).

A mitochondrion-targeting transit peptide spans 1 to 80 (MLLQLYRSVV…YHEHRCRASQ (80 aa)). Residues 83–162 (PRMYSKEDVR…LAEYKIGELN (80 aa)) form the Cytochrome b5 heme-binding domain. His-119 contacts heme b. Residue Ser-124 is modified to Phosphoserine. His-144, Gln-146, and His-148 together coordinate heme b. Positions 166 to 175 (SMSPSVEASD) are hinge. A moco domain region spans residues 176–402 (PYADDPIRHP…YSHWQRRDYK (227 aa)). Mo-molybdopterin-binding positions include 216–220 (FTRNH), Cys-265, Asp-323, His-362, Arg-367, and 378–380 (HVK). Residues 403–539 (GFSPSVDWDT…RGVLSNAWHR (137 aa)) are homodimerization.

As to quaternary structure, homodimer. It depends on heme b as a cofactor. The cofactor is Mo-molybdopterin.

The protein resides in the mitochondrion intermembrane space. The enzyme catalyses sulfite + O2 + H2O = sulfate + H2O2. It participates in energy metabolism; sulfur metabolism. Its function is as follows. Catalyzes the oxidation of sulfite to sulfate, the terminal reaction in the oxidative degradation of sulfur-containing amino acids. The protein is Sulfite oxidase, mitochondrial (Suox) of Mus musculus (Mouse).